The following is a 1274-amino-acid chain: DENN domain-containing protein 3 (1274 aa).

The interval 65–108 is disordered; the sequence is GQVPGASCALGKGRRRSFRKKREKPRMEPWKSHPGDSKGPDSED. The region spanning 75 to 245 is the uDENN domain; sequence GKGRRRSFRK…LIPSPPPGPL (171 aa). A compositionally biased stretch (basic residues) spans 76–88; it reads KGRRRSFRKKREK. Basic and acidic residues predominate over residues 89–105; that stretch reads PRMEPWKSHPGDSKGPD. The cDENN domain maps to 268-400; the sequence is IVDLDLHLPL…PLLLAQTFIQ (133 aa). The region spanning 402 to 506 is the dDENN domain; it reads VQSLQLHPDL…KARLNGRMDA (105 aa). Positions 520–970 are linker; the sequence is RIDRMLISPR…KHKINPSAGE (451 aa). Serine 554 and serine 572 each carry phosphoserine; by ULK1. Tyrosine 940 is subject to Phosphotyrosine. WD repeat units lie at residues 975-1013, 1019-1055, 1059-1099, 1103-1140, 1146-1181, 1186-1228, and 1234-1273; these read AIEV…VFDA, HQHC…IINV, SCNK…AWNV, RVIS…TPQG, LKHP…MWSL, QPPQ…IYVM, and TVEK…IWKV.

As to quaternary structure, forms oligomers. Interacts with 6 of the 7 known isoforms of 14-3-3 proteins.

It is found in the cytoplasm. In terms of biological role, guanine nucleotide exchange factor (GEF) activating Rab12. Promotes the exchange of GDP to GTP, converting inactive GDP-bound Rab12 into its active GTP-bound form. Regulates autophagy in response to starvation through Rab12 activation. Starvation leads to ULK1/2-dependent phosphorylation of Ser-554 and Ser-572, which in turn allows recruitment of 14-3-3 adapter proteins and leads to up-regulation of GEF activity towards Rab12. Also plays a role in protein transport from recycling endosomes to lysosomes, regulating, for instance, the degradation of the transferrin receptor and of the amino acid transporter PAT4. Starvation also induces phosphorylation at Tyr-940, which leads to up-regulated GEF activity and initiates autophagy. The sequence is that of DENN domain-containing protein 3 (Dennd3) from Mus musculus (Mouse).